Consider the following 186-residue polypeptide: Dihydrofolate reductase (186 aa).

The DHFR domain maps to 3–184 (PLNCIVAVSQ…IKYKFEVYEK (182 aa)). NADP(+) is bound by residues A9 and 15–21 (GIGKNGD). Position 30-35 (30-35 (EYKYFQ)) interacts with substrate. Position 32 is an N6-acetyllysine; alternate (K32). The residue at position 32 (K32) is an N6-succinyllysine; alternate. Position 54 to 56 (54 to 56 (RKT)) interacts with NADP(+). Residue R70 coordinates substrate. NADP(+) is bound by residues 76–78 (SRE) and 116–123 (GGSSVYKE). Position 162 is a cysteine derivative; partial (C162).

It belongs to the dihydrofolate reductase family. As to quaternary structure, homodimer.

It is found in the mitochondrion. The protein localises to the cytoplasm. It carries out the reaction (6S)-5,6,7,8-tetrahydrofolate + NADP(+) = 7,8-dihydrofolate + NADPH + H(+). It functions in the pathway cofactor biosynthesis; tetrahydrofolate biosynthesis; 5,6,7,8-tetrahydrofolate from 7,8-dihydrofolate: step 1/1. Its function is as follows. Key enzyme in folate metabolism. Contributes to the de novo mitochondrial thymidylate biosynthesis pathway. Catalyzes an essential reaction for de novo glycine and purine synthesis, and for DNA precursor synthesis. Binds its own mRNA and that of DHFR2. The protein is Dihydrofolate reductase (DHFR) of Sus scrofa (Pig).